Reading from the N-terminus, the 183-residue chain is Ribosome-recycling factor (183 aa).

The protein belongs to the RRF family.

The protein resides in the cytoplasm. In terms of biological role, responsible for the release of ribosomes from messenger RNA at the termination of protein biosynthesis. May increase the efficiency of translation by recycling ribosomes from one round of translation to another. This chain is Ribosome-recycling factor, found in Ureaplasma urealyticum serovar 10 (strain ATCC 33699 / Western).